The sequence spans 251 residues: uncharacterized protein (251 aa).

The segment at 207–251 (ATPHSKRGRTKLYRKEPPGDNRSPPPWQEPHGEGLAEKLSPGPAR) is disordered.

This is an uncharacterized protein from Treponema pallidum (strain Nichols).